A 65-amino-acid polypeptide reads, in one-letter code: Conotoxin VnMLCL-041 (65 aa).

The first 19 residues, 1–19 (MLCLPVFIILLLLASPAAP), serve as a signal peptide directing secretion. A propeptide spanning residues 20–43 (NPLQTRIQSNLIRAGPEDANIKTD) is cleaved from the precursor. Position 64 is a lysine amide (Lys64).

The protein belongs to the conotoxin T superfamily. Expressed by the venom duct.

It localises to the secreted. This is Conotoxin VnMLCL-041 from Conus ventricosus (Mediterranean cone).